Consider the following 1118-residue polypeptide: Cytospin-A (1118 aa).

The segment at 1 to 176 (MKKASRSVGS…SKSKSDNQIS (176 aa)) is disordered. Residues 29–52 (ESGSSLSAVTKLSKPGTSASLLKT) show a composition bias toward polar residues. The segment covering 79–119 (STCASTVSSTTGTTMSTLENKPRTVAGSTARRSTSSGTKES) has biased composition (low complexity). Composition is skewed to basic and acidic residues over residues 120-131 (SSSRERIRDRSR) and 158-171 (TNPESDIRMSKSKS). The stretch at 193 to 281 (KTKDVEILHL…LNALGFSLEQ (89 aa)) forms a coiled coil. Disordered regions lie at residues 299–324 (ITAGNHSDGGGTLTSSVEGSAPGSME) and 359–391 (SSDDALDAPSSSESEGVPSIERSRKGSSGNASE). A compositionally biased stretch (low complexity) spans 359–373 (SSDDALDAPSSSESE). Coiled coils occupy residues 396 to 450 (CLTE…MESL) and 488 to 808 (RYME…RGRV). Disordered stretches follow at residues 856–879 (PSPAAATIPRTPLSPSPMKTPPAA) and 921–1002 (TSST…RKDP). The span at 937-946 (ESAKSISVSR) shows a compositional bias: low complexity. A compositionally biased stretch (basic and acidic residues) spans 947–957 (RSSEEIKRDIS). The span at 972–991 (TTSPQLSLSSSPTASVTPTT) shows a compositional bias: low complexity. The region spanning 1012 to 1117 (GSKRNALLKW…YVTAIYKYFE (106 aa)) is the Calponin-homology (CH) domain.

Belongs to the cytospin-A family. As to quaternary structure, may interact with both microtubules and actin cytoskeleton.

The protein resides in the cytoplasm. The protein localises to the cytoskeleton. Its subcellular location is the spindle. It localises to the cell junction. It is found in the gap junction. Involved in cytokinesis and spindle organization. May play a role in actin cytoskeleton organization and microtubule stabilization and hence required for proper cell adhesion and migration. This is Cytospin-A (SPECC1L) from Gallus gallus (Chicken).